Here is a 465-residue protein sequence, read N- to C-terminus: Probable citrate synthase, mitochondrial (465 aa).

Active-site residues include H303, H349, and D404.

It belongs to the citrate synthase family. Homodimer.

The protein resides in the mitochondrion matrix. It carries out the reaction oxaloacetate + acetyl-CoA + H2O = citrate + CoA + H(+). It participates in carbohydrate metabolism; tricarboxylic acid cycle; isocitrate from oxaloacetate: step 1/2. This chain is Probable citrate synthase, mitochondrial, found in Glossina morsitans morsitans (Savannah tsetse fly).